A 549-amino-acid chain; its full sequence is Zinc finger protein 382 (549 aa).

Residues 1 to 105 (MNCHSVPLQG…DKPPTSIVII (105 aa)) form a mediates interaction with TRIM28 region. Represses transcription regions lie at residues 10–51 (GPVS…FISV) and 75–210 (MFPS…PEQR). One can recognise a KRAB domain in the interval 12–83 (VSFKDVTVDF…RMFPSQSYLE (72 aa)). C2H2-type zinc fingers lie at residues 211–233 (FECD…DRAH), 295–317 (FQCP…QRIH), 323–345 (YICS…EKTH), 351–373 (YLCV…HKTH), 379–401 (YECT…QRTH), 407–429 (YQCA…QRTH), 435–457 (YMCS…QRIH), 463–485 (YVCS…YRIH), 491–513 (NGCP…QKTH), and 519–541 (YECH…QKTH). The interval 295–549 (FQCPYCGNSF…THKAETVRFQ (255 aa)) is required for transcriptional repression activity; probably mediates sequence-specific DNA-binding.

Belongs to the krueppel C2H2-type zinc-finger protein family. As to quaternary structure, interacts with TRIM28; enhances the transcriptional repressor activity. Ubiquitously expressed with higher expression in lung, kidney and testis.

It localises to the nucleus. Its function is as follows. Functions as a sequence-specific transcriptional repressor. The chain is Zinc finger protein 382 (Znf382) from Rattus norvegicus (Rat).